The chain runs to 754 residues: Glutathione biosynthesis bifunctional protein GshAB (754 aa).

A glutamate--cysteine ligase region spans residues 1–332; that stretch reads MTLNQLLQKL…QGHALNEKIA (332 aa). One can recognise an ATP-grasp domain in the interval 488-746; it reads KKILADAGFP…ITTKILDKLF (259 aa). 515-573 lines the ATP pocket; sequence PLIKDKQIVVKPKSTNFGLGISIFQEPASLDNYQKALEIAFAEDTSVLVEEFIPGTEYR. Mg(2+)-binding residues include Asp-695, Glu-716, and Asn-718. The Mn(2+) site is built by Asp-695, Glu-716, and Asn-718.

This sequence in the N-terminal section; belongs to the glutamate--cysteine ligase type 1 family. Type 2 subfamily. In terms of assembly, monomer. Mg(2+) is required as a cofactor. The cofactor is Mn(2+).

It carries out the reaction L-cysteine + L-glutamate + ATP = gamma-L-glutamyl-L-cysteine + ADP + phosphate + H(+). It catalyses the reaction gamma-L-glutamyl-L-cysteine + glycine + ATP = glutathione + ADP + phosphate + H(+). It functions in the pathway sulfur metabolism; glutathione biosynthesis; glutathione from L-cysteine and L-glutamate: step 1/2. Its pathway is sulfur metabolism; glutathione biosynthesis; glutathione from L-cysteine and L-glutamate: step 2/2. Functionally, synthesizes glutathione from L-glutamate and L-cysteine via gamma-L-glutamyl-L-cysteine. The sequence is that of Glutathione biosynthesis bifunctional protein GshAB from Streptococcus thermophilus (strain CNRZ 1066).